The sequence spans 313 residues: Adhesin MafA 2 (313 aa).

The first 14 residues, 1-14, serve as a signal peptide directing secretion; sequence MKTLLLLIPLVLTA. A lipid anchor (N-palmitoyl cysteine) is attached at C15. C15 carries the S-diacylglycerol cysteine lipid modification. Over residues 282–297 the composition is skewed to polar residues; it reads GDTTAQNRPDFKQNNG. The tract at residues 282-313 is disordered; sequence GDTTAQNRPDFKQNNGKKPDVGNEVIRRRKGG.

Belongs to the MafA family.

The protein resides in the cell outer membrane. The polypeptide is Adhesin MafA 2 (mafA2) (Neisseria meningitidis serogroup A / serotype 4A (strain DSM 15465 / Z2491)).